The chain runs to 586 residues: Mitochondrial tRNA methylthiotransferase CDK5RAP1 (586 aa).

Residues M1 to A30 constitute a mitochondrion transit peptide. Residues A68–D90 are disordered. Residues R97 to S217 form the MTTase N-terminal domain. 6 residues coordinate [4Fe-4S] cluster: C106, C142, C180, C255, C259, and C262. The Radical SAM core domain occupies S241–K495. The 76-residue stretch at A498–C573 folds into the TRAM domain.

This sequence belongs to the methylthiotransferase family. MiaB subfamily. As to quaternary structure, interacts with CDK5R1 (p35 form). CDK5RAP1, CDK5RAP2 and CDK5RAP3 show competitive binding to CDK5R1. Forms a complex with CDK5R1 and CDK5. [4Fe-4S] cluster is required as a cofactor. As to expression, expressed in brain.

It is found in the mitochondrion inner membrane. The enzyme catalyses N(6)-dimethylallyladenosine(37) in tRNA + (sulfur carrier)-SH + AH2 + 2 S-adenosyl-L-methionine = 2-methylsulfanyl-N(6)-dimethylallyladenosine(37) in tRNA + (sulfur carrier)-H + 5'-deoxyadenosine + L-methionine + A + S-adenosyl-L-homocysteine + 2 H(+). Functionally, methylthiotransferase that catalyzes the conversion of N6-(dimethylallyl)adenosine (i(6)A) to 2-methylthio-N6-(dimethylallyl)adenosine (ms(2)i(6)A) at position 37 (adjacent to the 3'-end of the anticodon) of four mitochondrial DNA-encoded tRNAs (Ser(UCN), Phe, Tyr and Trp). Essential for efficient and highly accurate protein translation by the ribosome. Specifically inhibits CDK5 activation by CDK5R1. Essential for efficient mitochondrial protein synthesis and respiratory chain. This chain is Mitochondrial tRNA methylthiotransferase CDK5RAP1 (Cdk5rap1), found in Rattus norvegicus (Rat).